Here is a 281-residue protein sequence, read N- to C-terminus: Microtubule-associated protein RP/EB family member 3 (281 aa).

Residues 14–116 enclose the Calponin-homology (CH) domain; the sequence is NLSRHDMLAW…FIQWFKKFFD (103 aa). Disordered stretches follow at residues 157-181 and 260-281; these read VPQR…VAPP and EGFA…QDEY. Polar residues predominate over residues 158-175; that stretch reads PQRTSPTGPKNMQTSGRL. A phosphoserine mark is found at Ser162 and Ser176. The EB1 C-terminal domain occupies 194–264; that stretch reads GGHEADAQIL…LYATEEGFAP (71 aa). The segment at 217 to 260 is APC-binding; that stretch reads DGLEKERDFYFSKLRDIELICQEHESENSPVISGIIGILYATEE. A DCTN1-binding region spans residues 217 to 281; the sequence is DGLEKERDFY…EHQQEDQDEY (65 aa). Basic and acidic residues predominate over residues 272–281; that stretch reads EHQQEDQDEY.

It belongs to the MAPRE family. As to quaternary structure, homodimer. Heterodimer with MAPRE1. Binds monomeric and polymerized GTP-bound tubulin. Interacts with DCTN1 and SRCIN1. Binds to the C-terminal domain of APC. Interacts (via C-terminus) with CLIP1. Interacts with SLAIN2. Interacts with SLAIN1. Interacts with APC2. Interacts with AKAP9. Interacts with PDE4DIP isoform 2/MMG8/SMYLE; this interaction is required for its recruitment to the Golgi apparatus.

It localises to the cytoplasm. The protein localises to the cytoskeleton. Functionally, plus-end tracking protein (+TIP) that binds to the plus-end of microtubules and regulates the dynamics of the microtubule cytoskeleton. Promotes microtubule growth. May be involved in spindle function by stabilizing microtubules and anchoring them at centrosomes. Also acts as a regulator of minus-end microtubule organization: interacts with the complex formed by AKAP9 and PDE4DIP, leading to recruit CAMSAP2 to the Golgi apparatus, thereby tethering non-centrosomal minus-end microtubules to the Golgi, an important step for polarized cell movement. Promotes elongation of CAMSAP2-decorated microtubule stretches on the minus-end of microtubules. The polypeptide is Microtubule-associated protein RP/EB family member 3 (Mapre3) (Mus musculus (Mouse)).